The primary structure comprises 124 residues: Small ribosomal subunit protein uS13 (124 aa).

Positions 95 to 124 are disordered; it reads GLPVRGQRTKTNARTRKGPKRTIAGKKKAR.

The protein belongs to the universal ribosomal protein uS13 family. Part of the 30S ribosomal subunit. Forms a loose heterodimer with protein S19. Forms two bridges to the 50S subunit in the 70S ribosome.

Functionally, located at the top of the head of the 30S subunit, it contacts several helices of the 16S rRNA. In the 70S ribosome it contacts the 23S rRNA (bridge B1a) and protein L5 of the 50S subunit (bridge B1b), connecting the 2 subunits; these bridges are implicated in subunit movement. Contacts the tRNAs in the A and P-sites. The polypeptide is Small ribosomal subunit protein uS13 (Mycobacterium marinum (strain ATCC BAA-535 / M)).